The primary structure comprises 942 residues: Cilia- and flagella-associated protein 69 (942 aa).

The segment covering 1–16 has biased composition (low complexity); that stretch reads MSTAEASATTADAAEA. The segment at 1-25 is disordered; sequence MSTAEASATTADAAEAGGRTKTGSP.

Expressed in ciliated olfactory sensory neurons (at protein level). Expressed in testis, specifically in sperm (at protein level).

It is found in the cell projection. The protein localises to the cilium. It localises to the flagellum. In terms of biological role, cilium- and flagellum-associated protein. In the olfactory epithelium, regulates the speed of activation and termination of the odor response and thus contributes to the robustness of olfactory transduction pathways. Required for sperm flagellum assembly and stability. This chain is Cilia- and flagella-associated protein 69, found in Mus musculus (Mouse).